An 859-amino-acid chain; its full sequence is Bifunctional heparan sulfate N-deacetylase/N-sulfotransferase 1 (859 aa).

Topologically, residues 1–13 are cytoplasmic; that stretch reads MIITPYLNPRLVK. A helical; Signal-anchor for type II membrane protein transmembrane segment spans residues 14–34; it reads PLKWLAIIILLYFLYFSLFSI. The tract at residues 34-575 is heparan sulfate N-deacetylase 1; the sequence is INKKPGKPRK…PRHQAILPPS (542 aa). Over 35–859 the chain is Lumenal; the sequence is NKKPGKPRKP…WLEEAVRIRV (825 aa). Asn-50, Asn-74, Asn-210, Asn-262, Asn-378, and Asn-429 each carry an N-linked (GlcNAc...) asparagine glycan. Residues 576-859 form a heparan sulfate N-sulfotransferase 1 region; that stretch reads MSCSKKSLPD…WLEEAVRIRV (284 aa). The active-site For sulfotransferase activity is Lys-593. A 3'-phosphoadenylyl sulfate-binding site is contributed by 593–597; sequence KTGST. N-linked (GlcNAc...) asparagine glycosylation is found at Asn-608 and Asn-643. Ser-687 is a 3'-phosphoadenylyl sulfate binding site. A glycan (N-linked (GlcNAc...) asparagine) is linked at Asn-715. Cys-796 and Cys-805 are joined by a disulfide. 810–814 provides a ligand contact to 3'-phosphoadenylyl sulfate; the sequence is KGRKY.

The protein belongs to the sulfotransferase 1 family. NDST subfamily. In terms of assembly, monomer.

It localises to the golgi apparatus membrane. It catalyses the reaction alpha-D-glucosaminyl-[heparan sulfate](n) + 3'-phosphoadenylyl sulfate = N-sulfo-alpha-D-glucosaminyl-[heparan sulfate](n) + adenosine 3',5'-bisphosphate + 2 H(+). It functions in the pathway glycan metabolism; heparan sulfate biosynthesis. It participates in glycan metabolism; heparin biosynthesis. Its function is as follows. Essential bifunctional enzyme that catalyzes both the N-deacetylation and the N-sulfation of glucosamine (GlcNAc) of the glycosaminoglycan in heparan sulfate. Modifies the GlcNAc-GlcA disaccharide repeating sugar backbone to make N-sulfated heparosan, a prerequisite substrate for later modifications in heparin biosynthesis. This is Bifunctional heparan sulfate N-deacetylase/N-sulfotransferase 1 (hst-1) from Caenorhabditis briggsae.